A 607-amino-acid polypeptide reads, in one-letter code: Large ribosomal subunit assembly factor BipA (607 aa).

The 196-residue stretch at Glu3–Asp198 folds into the tr-type G domain. Residues Asp15–Thr20 and Asn128–Asp131 contribute to the GTP site. A C-terminal domain (CTD), required but not sufficient to bind 70S or 30S ribosomes region spans residues Gly481–Glu607.

It belongs to the TRAFAC class translation factor GTPase superfamily. Classic translation factor GTPase family. BipA subfamily. Monomer.

The protein resides in the cytoplasm. It carries out the reaction GTP + H2O = GDP + phosphate + H(+). With respect to regulation, ribosome-associated GTPase is not affected by low levels of ppGpp, &gt;40 uM ppGpp and &gt;50 uM GDP inhibit GTPase. The C-terminus (residues 387-607 or 481-607) inhibits GTPase activity, in its absence kcat increases, but GTPase is no longer stimulated by 70S ribosome or 30S or 50S subunits. A 50S ribosomal subunit assembly protein with GTPase activity, required for 50S subunit assembly at low temperatures, may also play a role in translation. Binds GTP and analogs. Binds the 70S ribosome between the 30S and 50S subunits, in a similar position as ribosome-bound EF-G; it contacts a number of ribosomal proteins, both rRNAs and the A-site tRNA. A ribosome-stimulated GTPase, GTPase activity increases 4 fold in the presence of 70S ribosomes. Binds 70S ribosomes in the presence of GTP or its non-hydrolyzable analog GMPPNP; in the presence of ppGpp or under stress conditions it binds to 30S ribosomal subunits. The sequence is that of Large ribosomal subunit assembly factor BipA from Salmonella typhimurium (strain LT2 / SGSC1412 / ATCC 700720).